The following is a 245-amino-acid chain: MIIPALDLIDGTVVRLHQGDYGKQRDYGNDPLPRLQDYAAQGAEVLHLVDLTGAKDPAKRQIPLIKTLVAGVNVPVQVGGGVRSEEDVAALLEAGVARVVVGSTAVKSPEMVKGWFERFGADALVLALDVRIDEQGNKQVAVSGWQENSGVSLEQLVETYLPVGLKHVLCTDISRDGTLAGSNVSLYEEVCARYPQVAFQSSGGIGDIDDVAALRGTGVRGVIVGRALLEGKFTVKEAIACWQNA.

Residue Asp-7 is the Proton acceptor of the active site. Asp-129 serves as the catalytic Proton donor.

Belongs to the HisA/HisF family.

It is found in the cytoplasm. The enzyme catalyses 1-(5-phospho-beta-D-ribosyl)-5-[(5-phospho-beta-D-ribosylamino)methylideneamino]imidazole-4-carboxamide = 5-[(5-phospho-1-deoxy-D-ribulos-1-ylimino)methylamino]-1-(5-phospho-beta-D-ribosyl)imidazole-4-carboxamide. It functions in the pathway amino-acid biosynthesis; L-histidine biosynthesis; L-histidine from 5-phospho-alpha-D-ribose 1-diphosphate: step 4/9. This chain is 1-(5-phosphoribosyl)-5-[(5-phosphoribosylamino)methylideneamino] imidazole-4-carboxamide isomerase, found in Escherichia coli O9:H4 (strain HS).